The chain runs to 255 residues: Imidazole glycerol phosphate synthase subunit HisF (255 aa).

Residues Asp-11 and Asp-130 contribute to the active site.

The protein belongs to the HisA/HisF family. Heterodimer of HisH and HisF.

The protein resides in the cytoplasm. The catalysed reaction is 5-[(5-phospho-1-deoxy-D-ribulos-1-ylimino)methylamino]-1-(5-phospho-beta-D-ribosyl)imidazole-4-carboxamide + L-glutamine = D-erythro-1-(imidazol-4-yl)glycerol 3-phosphate + 5-amino-1-(5-phospho-beta-D-ribosyl)imidazole-4-carboxamide + L-glutamate + H(+). The protein operates within amino-acid biosynthesis; L-histidine biosynthesis; L-histidine from 5-phospho-alpha-D-ribose 1-diphosphate: step 5/9. IGPS catalyzes the conversion of PRFAR and glutamine to IGP, AICAR and glutamate. The HisF subunit catalyzes the cyclization activity that produces IGP and AICAR from PRFAR using the ammonia provided by the HisH subunit. The sequence is that of Imidazole glycerol phosphate synthase subunit HisF from Syntrophotalea carbinolica (strain DSM 2380 / NBRC 103641 / GraBd1) (Pelobacter carbinolicus).